Reading from the N-terminus, the 383-residue chain is ATP phosphoribosyltransferase regulatory subunit (383 aa).

Belongs to the class-II aminoacyl-tRNA synthetase family. HisZ subfamily. As to quaternary structure, heteromultimer composed of HisG and HisZ subunits.

The protein resides in the cytoplasm. The protein operates within amino-acid biosynthesis; L-histidine biosynthesis; L-histidine from 5-phospho-alpha-D-ribose 1-diphosphate: step 1/9. Functionally, required for the first step of histidine biosynthesis. May allow the feedback regulation of ATP phosphoribosyltransferase activity by histidine. The sequence is that of ATP phosphoribosyltransferase regulatory subunit from Paraburkholderia phymatum (strain DSM 17167 / CIP 108236 / LMG 21445 / STM815) (Burkholderia phymatum).